Consider the following 395-residue polypeptide: Altered inheritance of mitochondria protein 39, mitochondrial (395 aa).

A helical transmembrane segment spans residues glutamine 156–tyrosine 176.

The protein belongs to the AIM39 family.

It is found in the mitochondrion membrane. The polypeptide is Altered inheritance of mitochondria protein 39, mitochondrial (AIM39) (Saccharomyces cerevisiae (strain RM11-1a) (Baker's yeast)).